The primary structure comprises 287 residues: Festuclavine synthase I (287 aa).

This sequence belongs to the fgaFS/easG family.

The catalysed reaction is festuclavine + NAD(+) = 6,8-dimethyl-6,7-didehydroergoline + NADH + H(+). The protein operates within alkaloid biosynthesis; ergot alkaloid biosynthesis. Festuclavine synthase; part of the gene cluster that mediates the biosynthesis of isofumigaclavines, fungal ergot alkaloids. The tryptophan dimethylallyltransferase ifgA catalyzes the first step of ergot alkaloid biosynthesis by condensing dimethylallyl diphosphate (DMAP) and tryptophan to form 4-dimethylallyl-L-tryptophan. The second step is catalyzed by the methyltransferase ifgB that methylates 4-dimethylallyl-L-tryptophan in the presence of S-adenosyl-L-methionine, resulting in the formation of N-methyl-dimethylallyl-L-tryptophan. The catalase ifgD and the FAD-dependent oxidoreductase ifgC then transform N-methyl-dimethylallyl-L-tryptophan to chanoclavine-I which is further oxidized by ifgE in the presence of NAD(+), resulting in the formation of chanoclavine-I aldehyde. The chanoclavine-I aldehyde reductases ifgG and/or fgaOx3 reduce chanoclavine-I aldehyde to dihydrochanoclavine-I aldehyde that spontaneously dehydrates to form 6,8-dimethyl-6,7-didehydroergoline. The festuclavine dehydrogenases ifgF1 and/or ifgF2 then catalyze the reduction of 6,8-dimethyl-6,7-didehydroergoline to form festuclavine. Hydrolysis of festuclavine by a yet undetermined cytochrome P450 monooxygenase (called ifgH) then leads to the formation of isofumigaclavine B which is in turn acetylated by ifgI to isofumigaclavine A. Penicillium roqueforti has interestingly at least two sets of genes for the consumption of chanoclavine-I aldehyde on three different loci, the OYEs ifgG/fgaOx3 and the festuclavine synthase homologs ifgF1/ifgF2. The reason for the duplication of these genes is unclear, probably to ensure the conversion of chanoclavine-I aldehyde by differential gene expression under various environmental conditions. The polypeptide is Festuclavine synthase I (Penicillium roqueforti (strain FM164)).